An 80-amino-acid polypeptide reads, in one-letter code: Keratin-associated protein 6-1 (80 aa).

It belongs to the KRTAP type 6 family. As to quaternary structure, interacts with hair keratins.

Functionally, in the hair cortex, hair keratin intermediate filaments are embedded in an interfilamentous matrix, consisting of hair keratin-associated proteins (KRTAP), which are essential for the formation of a rigid and resistant hair shaft through their extensive disulfide bond cross-linking with abundant cysteine residues of hair keratins. The matrix proteins include the high-sulfur and high-glycine-tyrosine keratins. The protein is Keratin-associated protein 6-1 (KRTAP6-1) of Oryctolagus cuniculus (Rabbit).